A 442-amino-acid polypeptide reads, in one-letter code: Ribulose bisphosphate carboxylase/oxygenase activase 1, chloroplastic (442 aa).

Residues 1–58 (MATSVSTIGAVNKTPLSLNNSVAGTSVPSTAFFGKTLKKVYGKGVSSPKVTNKSLRIV) constitute a chloroplast transit peptide. 169–176 (GGKGQGKS) lines the ATP pocket.

The protein belongs to the RuBisCO activase family.

It localises to the plastid. The protein localises to the chloroplast stroma. In terms of biological role, activation of RuBisCO (ribulose-1,5-bisphosphate carboxylase/oxygenase; EC 4.1.1.39) involves the ATP-dependent carboxylation of the epsilon-amino group of lysine leading to a carbamate structure. The protein is Ribulose bisphosphate carboxylase/oxygenase activase 1, chloroplastic of Nicotiana tabacum (Common tobacco).